Here is a 307-residue protein sequence, read N- to C-terminus: Plastid division protein PDV2 (307 aa).

At Met-1 the chain carries N-acetylmethionine. Topologically, residues 1–213 (MEDEEGIGLI…SGGSSHGVIR (213 aa)) are cytoplasmic. Residues 28–66 (SSTTVSDNGDGNEDLSPGEGRKSEIIGNQDKDFDSISSE) are disordered. Positions 46–61 (EGRKSEIIGNQDKDFD) are enriched in basic and acidic residues. At Ser-50 the chain carries Phosphoserine. Residues 76-103 (LLRIRDALEALESQLASLQNLRQRQQYE) adopt a coiled-coil conformation. Positions 174–206 (HLPSKKKSDANGFGSGHVRNEAEAKSPNGGSGG) are disordered. Residues 214 to 234 (FLGSVAKIVLPIIGVISLLSA) traverse the membrane as a helical segment. Over 235 to 307 (SGYGPEMRKR…AKRDVTYGYG (73 aa)) the chain is Chloroplast intermembrane. Residues 235 to 307 (SGYGPEMRKR…AKRDVTYGYG (73 aa)) form an ARC6 binding region.

As to quaternary structure, interacts (via C-terminus) with ARC6 (via C-terminus) in the chloroplast intermembrane space; this interaction induces ARC6 homodimerization and leads to the formation of a heterotetramer containing two ARC6 and two PDV2 subunits. Interacts with ARC5/DRP5B. Mostly expressed in young leaves.

The protein resides in the plastid. It is found in the chloroplast outer membrane. Functionally, component of the plastid division machinery consisting in a binary fission accomplished by the simultaneous constriction of the FtsZ ring on the stromal side of the inner envelope membrane, and the ARC5/DRP5B ring on the cytosolic side of the outer envelope membrane. Positive factor of chloroplast division required, with a dosage effect, to mediate the recruitment and dimerization of ARC5/DRP5B at the midplastid constriction site in the cytoplasm at plastid outer envelope membranes (OEMs). Prevents ARC5/DRP5B GTPase acrivity. Relays plastid division site position between stroma and outer surface via interactions with the cytoplasmic ARC5/DRP5B and the inner membrane ARC6 that recruits stromal FtsZ ring. Binding to phosphatidylinositol 4-phosphate (PI4P) modulates negatively chloroplast division. The sequence is that of Plastid division protein PDV2 from Arabidopsis thaliana (Mouse-ear cress).